The chain runs to 332 residues: Melanocortin receptor 4 (332 aa).

Residues 1 to 43 (MNSTHHHGMYTSLHLWNRSSHGLHGNASESLGKGHSDGGCYEQ) are Extracellular-facing. N-linked (GlcNAc...) asparagine glycans are attached at residues asparagine 2, asparagine 17, and asparagine 26. 2 cysteine pairs are disulfide-bonded: cysteine 40/cysteine 279 and cysteine 271/cysteine 277. The helical transmembrane segment at 44 to 69 (LFVSPEVFVTLGVISLLENILVIVAI) threads the bilayer. Residues 70 to 81 (AKNKNLHSPMYF) lie on the Cytoplasmic side of the membrane. Residues 82 to 106 (FICSLAVADMLVSVSNGSETIVITL) traverse the membrane as a helical segment. Ca(2+) contacts are provided by glutamate 100, aspartate 122, and aspartate 126. Residues 107 to 123 (LNSTDTDAQSFTVNIDN) lie on the Extracellular side of the membrane. A helical transmembrane segment spans residues 124–145 (VIDSVICSSLLASICSLLSIAV). Residues 146–165 (DRYFTIFYALQYHNIMTVRR) are Cytoplasmic-facing. Residues 166–186 (VGIIISCIWAACTVSGVLFII) form a helical membrane-spanning segment. Topologically, residues 187-191 (YSDSS) are extracellular. The helical transmembrane segment at 192 to 215 (AVIICLITMFFTMLVLMASLYVHM) threads the bilayer. Residues 216–248 (FLMARLHIKRIAVLPGTGTIRQGANMKGAITLT) lie on the Cytoplasmic side of the membrane. The chain crosses the membrane as a helical span at residues 249–271 (ILIGVFVVCWAPFFLHLLFYISC). Over 272-280 (PQNPYCVCF) the chain is Extracellular. The chain crosses the membrane as a helical span at residues 281–304 (MSHFNLYLILIMCNAVIDPLIYAL). The Cytoplasmic portion of the chain corresponds to 305–332 (RSQELRKTFKEIICFYPLGGICELPGRY). Cysteine 318 carries the S-palmitoyl cysteine lipid modification.

It belongs to the G-protein coupled receptor 1 family. In terms of assembly, homodimer; disulfide-linked, also forms higher order oligomers. Interacts with GNAS. Interacts with ATRNL1. Interacts with MGRN1; this interaction competes with GNAS-binding and thus inhibits agonist-induced cAMP production. Interacts with MRAP and MRAP2; these associated factors increase ligand-sensitivity and generation of cAMP. In terms of tissue distribution, brain, enriched in the striatum, nucleus accumbens, and periaqueductal gray.

The protein localises to the cell membrane. Functionally, hormone receptor that acts as a key component of the leptin-melanocortin pathway at the intersection of homeostatic maintenance of energetic state. Plays a role in regulating food intake: activation by a stimulating hormone such as anorexigenic alpha-melanocyte stimulating hormone (alpha-MSH) inhibits appetite, whereas binding to a natural antagonist like Agouti-related protein/AGRP promotes appetite. G-protein-coupled receptor that activates conventional Galphas signaling leading to induction of anorexogenic signaling in the hypothalamus to result in negative energy balance. Regulates the firing activity of neurons from the hypothalamus by alpha-MSH and AGRP independently of Galphas signaling by ligand-induced coupling of closure of inwardly rectifying potassium channel KCNJ13. In intestinal epithelial cells, plays a role in the inhibition of hepatic glucose production via nesfatin-1/NUCB2 leading to increased cyclic adenosine monophosphate (cAMP) levels and glucagon-like peptide 1 (GLP-1) secretion in the intestinal epithelium. This chain is Melanocortin receptor 4 (Mc4r), found in Rattus norvegicus (Rat).